We begin with the raw amino-acid sequence, 145 residues long: Maximins 3/H3 type 1 (145 aa).

Residues 1–18 form the signal peptide; the sequence is MNFKYIVAVSFLIASAYA. Propeptides lie at residues 19–43 and 74–124; these read RSVQ…LREI and RIAE…KEKR. Isoleucine amide is present on isoleucine 144.

The protein belongs to the bombinin family. In terms of tissue distribution, expressed by the skin glands.

The protein resides in the secreted. Functionally, maximin-3 shows antibacterial activity against both Gram-positive and Gram-negative bacteria. It also shows antimicrobial activity against the fungus C.albicans, but not against A.flavus nor P.uticale. It has little hemolytic activity. It possess a significant cytotoxicity against tumor cell lines. It possess a significant anti-HIV activity. It shows high spermicidal activity. Maximin-H3 shows antibacterial activity against both Gram-positive and Gram-negative bacteria. It also shows antimicrobial activity against the fungus C.albicans. Shows strong hemolytic activity. This chain is Maximins 3/H3 type 1, found in Bombina maxima (Giant fire-bellied toad).